The chain runs to 229 residues: Protein GrpE (229 aa).

The tract at residues 1–89 (MSDFNKDDYL…AEGSSLTPLG (89 aa)) is disordered. Over residues 24–36 (ASPDADGADAPSD) the composition is skewed to low complexity. Over residues 39-50 (EQLKDDMLKDAA) the composition is skewed to basic and acidic residues. Residues 65–84 (KAAAEATADAASDGDAEGSS) show a composition bias toward low complexity.

The protein belongs to the GrpE family. Homodimer.

The protein localises to the cytoplasm. In terms of biological role, participates actively in the response to hyperosmotic and heat shock by preventing the aggregation of stress-denatured proteins, in association with DnaK and GrpE. It is the nucleotide exchange factor for DnaK and may function as a thermosensor. Unfolded proteins bind initially to DnaJ; upon interaction with the DnaJ-bound protein, DnaK hydrolyzes its bound ATP, resulting in the formation of a stable complex. GrpE releases ADP from DnaK; ATP binding to DnaK triggers the release of the substrate protein, thus completing the reaction cycle. Several rounds of ATP-dependent interactions between DnaJ, DnaK and GrpE are required for fully efficient folding. This Bifidobacterium animalis subsp. lactis (strain AD011) protein is Protein GrpE.